A 288-amino-acid polypeptide reads, in one-letter code: Prepilin leader peptidase/N-methyltransferase (288 aa).

Residues 14 to 34 (FITLATVLGLLVGSFLNVVVY) form a helical membrane-spanning segment. Zn(2+)-binding residues include cysteine 71, cysteine 74, cysteine 96, and cysteine 99. The next 6 helical transmembrane spans lie at 103-123 (ISVR…VVAW), 127-147 (ASVE…LSLI), 158-178 (IVLP…WVPL), 182-202 (VCGA…FKLV), 227-247 (VLPL…VYLL), and 254-274 (MGTA…AVLW).

Belongs to the peptidase A24 family. Zn(2+) serves as cofactor.

It localises to the cell inner membrane. It catalyses the reaction Typically cleaves a -Gly-|-Phe- bond to release an N-terminal, basic peptide of 5-8 residues from type IV prepilin, and then N-methylates the new N-terminal amino group, the methyl donor being S-adenosyl-L-methionine.. Plays an essential role in type IV pili and type II pseudopili formation by proteolytically removing the leader sequence from substrate proteins and subsequently monomethylating the alpha-amino group of the newly exposed N-terminal phenylalanine. This Pseudomonas putida (Arthrobacter siderocapsulatus) protein is Prepilin leader peptidase/N-methyltransferase (pilD).